Reading from the N-terminus, the 399-residue chain is uncharacterized protein (399 aa).

WD repeat units lie at residues 59–99 (EHKD…QICQ), 102–141 (GHKD…EFIT), 144–185 (ETVD…QVMY), 187–227 (HTAP…PECR), 241–280 (ETAA…ILAS), 283–322 (AQTE…FRKS), 324–363 (PHEQ…LLGE), and 366–399 (GHQE…DCEH).

The protein localises to the cytoplasm. The protein resides in the nucleus. This is an uncharacterized protein from Schizosaccharomyces pombe (strain 972 / ATCC 24843) (Fission yeast).